The sequence spans 1342 residues: DNA-directed RNA polymerase subunit beta (1342 aa).

Belongs to the RNA polymerase beta chain family. The RNAP catalytic core consists of 2 alpha, 1 beta, 1 beta' and 1 omega subunit. When a sigma factor is associated with the core the holoenzyme is formed, which can initiate transcription.

The enzyme catalyses RNA(n) + a ribonucleoside 5'-triphosphate = RNA(n+1) + diphosphate. Functionally, DNA-dependent RNA polymerase catalyzes the transcription of DNA into RNA using the four ribonucleoside triphosphates as substrates. The sequence is that of DNA-directed RNA polymerase subunit beta from Tolumonas auensis (strain DSM 9187 / NBRC 110442 / TA 4).